The primary structure comprises 236 residues: Small ribosomal subunit protein uS2c (236 aa).

It belongs to the universal ribosomal protein uS2 family.

The protein resides in the plastid. The protein localises to the chloroplast. This is Small ribosomal subunit protein uS2c (rps2) from Agrostis stolonifera (Creeping bentgrass).